The chain runs to 258 residues: MFKVRVIPCLDVKDGRVVKGVNFVNLRDAGDPVEAAIAYDAAGADELCFLDITATHENRGIMLDVVRRTAEACFMPVTVGGGVRTIDDIKTLLRSGADKVSINSAAVARREFVKEAAEKFGEQCIVVAIDAKSVARPGGGSRWEIFTHGGRKSTGIDALEYAQEVVSLGAGEILLTSMDRDGTRQGFDIPLTRAVADSVPVPVIASGGVGNLDHLVDGIRQGRATAVLAASIFHFGEFTIRQAKEHMVRQGLPMRLDP.

Catalysis depends on residues Asp11 and Asp130.

This sequence belongs to the HisA/HisF family. Heterodimer of HisH and HisF.

Its subcellular location is the cytoplasm. The catalysed reaction is 5-[(5-phospho-1-deoxy-D-ribulos-1-ylimino)methylamino]-1-(5-phospho-beta-D-ribosyl)imidazole-4-carboxamide + L-glutamine = D-erythro-1-(imidazol-4-yl)glycerol 3-phosphate + 5-amino-1-(5-phospho-beta-D-ribosyl)imidazole-4-carboxamide + L-glutamate + H(+). It participates in amino-acid biosynthesis; L-histidine biosynthesis; L-histidine from 5-phospho-alpha-D-ribose 1-diphosphate: step 5/9. Functionally, IGPS catalyzes the conversion of PRFAR and glutamine to IGP, AICAR and glutamate. The HisF subunit catalyzes the cyclization activity that produces IGP and AICAR from PRFAR using the ammonia provided by the HisH subunit. The sequence is that of Imidazole glycerol phosphate synthase subunit HisF from Bradyrhizobium sp. (strain BTAi1 / ATCC BAA-1182).